Here is a 74-residue protein sequence, read N- to C-terminus: SPbeta prophage-derived uncharacterized HTH-type transcriptional regulator YopS (74 aa).

An HTH cro/C1-type domain is found at 11 to 66 (IPELCRKKDITINELSEITGIKKQQLSDYNRLVKVDMSIRTAKRIAAALDCNVEDL). Residues 22-41 (INELSEITGIKKQQLSDYNR) constitute a DNA-binding region (H-T-H motif).

This Bacillus subtilis (strain 168) protein is SPbeta prophage-derived uncharacterized HTH-type transcriptional regulator YopS (yopS).